The primary structure comprises 207 residues: DNA protection during starvation protein 1 (207 aa).

Residues 1 to 12 (MTKKSTKSEAAS) are compositionally biased toward basic and acidic residues. The disordered stretch occupies residues 1–31 (MTKKSTKSEAASKTKKSGVPETGAQGVRAGG). The Fe cation site is built by H83, D110, and E114.

It belongs to the Dps family. The 12 subunits form a hollow sphere into which the mineral iron core of up to 500 Fe(3+) can be deposited. The homododecameric forms at higher concentration of salt, the homodimeric form under reducing, low-salt conditions. The assembly of the dodecamer is irreversible.

Its subcellular location is the cytoplasm. It is found in the nucleoid. It carries out the reaction 2 Fe(2+) + H2O2 + 2 H(+) = 2 Fe(3+) + 2 H2O. Functionally, protects DNA from oxidative damage by sequestering intracellular Fe(2+) ion and storing it in the form of Fe(3+) oxyhydroxide mineral. One hydrogen peroxide oxidizes two Fe(2+) ions, which prevents hydroxyl radical production by the Fenton reaction. Both oligomeric forms of dps exhibit ferroxidase activity and DNA binding. Dodecameric dps is capable of Fe(2+) oxidation/mineralization. Only dimeric dps affords efficient DNA protection against hydroxyl radical-mediated cleavage. The sequence is that of DNA protection during starvation protein 1 (dps1) from Deinococcus radiodurans (strain ATCC 13939 / DSM 20539 / JCM 16871 / CCUG 27074 / LMG 4051 / NBRC 15346 / NCIMB 9279 / VKM B-1422 / R1).